Here is a 140-residue protein sequence, read N- to C-terminus: Holo-[acyl-carrier-protein] synthase (140 aa).

Mg(2+)-binding residues include Asp-7 and Glu-58.

The protein belongs to the P-Pant transferase superfamily. AcpS family. Requires Mg(2+) as cofactor.

It localises to the cytoplasm. It carries out the reaction apo-[ACP] + CoA = holo-[ACP] + adenosine 3',5'-bisphosphate + H(+). Functionally, transfers the 4'-phosphopantetheine moiety from coenzyme A to a Ser of acyl-carrier-protein. The protein is Holo-[acyl-carrier-protein] synthase of Chloroflexus aggregans (strain MD-66 / DSM 9485).